The primary structure comprises 391 residues: Polyisoprenyl-teichoic acid--peptidoglycan teichoic acid transferase TagV (391 aa).

Residues 1–23 lie on the Cytoplasmic side of the membrane; it reads MAERVRVRVRKKKKSKRRKILKR. The chain crosses the membrane as a helical; Signal-anchor for type II membrane protein span at residues 24 to 44; sequence IMLLFALALLVVVGLGGYKLY. Over 45–391 the chain is Extracellular; that stretch reads KTINAADESY…TTNSTTDSSY (347 aa). The disordered stretch occupies residues 329–391; sequence DYTPDTSTGT…TTNSTTDSSY (63 aa). The segment covering 333-391 has biased composition (low complexity); the sequence is DTSTGTSGTEDGTDSSSSSGSTGSTGTTTDGTTNGSSYSNDSSTSSNNSTTNSTTDSSY.

The protein belongs to the LytR/CpsA/Psr (LCP) family.

Its subcellular location is the cell membrane. The protein operates within cell wall biogenesis. May catalyze the final step in cell wall teichoic acid biosynthesis, the transfer of the anionic cell wall polymers (APs) from their lipid-linked precursor to the cell wall peptidoglycan (PG). This chain is Polyisoprenyl-teichoic acid--peptidoglycan teichoic acid transferase TagV, found in Bacillus subtilis (strain 168).